We begin with the raw amino-acid sequence, 109 residues long: Large ribosomal subunit protein uL22 (109 aa).

This sequence belongs to the universal ribosomal protein uL22 family. In terms of assembly, part of the 50S ribosomal subunit.

Functionally, this protein binds specifically to 23S rRNA; its binding is stimulated by other ribosomal proteins, e.g. L4, L17, and L20. It is important during the early stages of 50S assembly. It makes multiple contacts with different domains of the 23S rRNA in the assembled 50S subunit and ribosome. In terms of biological role, the globular domain of the protein is located near the polypeptide exit tunnel on the outside of the subunit, while an extended beta-hairpin is found that lines the wall of the exit tunnel in the center of the 70S ribosome. This Ralstonia nicotianae (strain ATCC BAA-1114 / GMI1000) (Ralstonia solanacearum) protein is Large ribosomal subunit protein uL22.